The chain runs to 277 residues: tRNA uridine(34) hydroxylase (277 aa).

Positions 126-221 constitute a Rhodanese domain; it reads SSPDVHVIDT…YLETMRGDDS (96 aa). Cys181 (cysteine persulfide intermediate) is an active-site residue.

The protein belongs to the TrhO family.

The catalysed reaction is uridine(34) in tRNA + AH2 + O2 = 5-hydroxyuridine(34) in tRNA + A + H2O. Catalyzes oxygen-dependent 5-hydroxyuridine (ho5U) modification at position 34 in tRNAs. The chain is tRNA uridine(34) hydroxylase from Anaplasma marginale (strain St. Maries).